The primary structure comprises 169 residues: Transcription antitermination protein NusB (169 aa).

Belongs to the NusB family.

In terms of biological role, involved in transcription antitermination. Required for transcription of ribosomal RNA (rRNA) genes. Binds specifically to the boxA antiterminator sequence of the ribosomal RNA (rrn) operons. This chain is Transcription antitermination protein NusB, found in Rhodococcus opacus (strain B4).